The primary structure comprises 490 residues: ATP synthase subunit beta, plastid (490 aa).

Gly-170–Thr-177 serves as a coordination point for ATP.

The protein belongs to the ATPase alpha/beta chains family. As to quaternary structure, F-type ATPases have 2 components, CF(1) - the catalytic core - and CF(0) - the membrane proton channel. CF(1) has five subunits: alpha(3), beta(3), gamma(1), delta(1), epsilon(1). CF(0) has four main subunits: a(1), b(1), b'(1) and c(9-12).

It is found in the plastid membrane. The catalysed reaction is ATP + H2O + 4 H(+)(in) = ADP + phosphate + 5 H(+)(out). Functionally, produces ATP from ADP in the presence of a proton gradient across the membrane. The catalytic sites are hosted primarily by the beta subunits. The polypeptide is ATP synthase subunit beta, plastid (Cuscuta exaltata (Tall dodder)).